The primary structure comprises 859 residues: MGTTASTAQQTVSAGTSLEGLQGGSSSSMDSQHSLGGVQSFRATSLHNSKAKSIIPNKVAPVVITYNCKEEFQIHDELLKAHYRMGRLSDATPEHYLVQGRYFLVRDITEKMDILGTLKSCGAPNFRQVRGGLPVFGMGQPSLLGFRRVLQKLQTDGLKECIIFCVREEPVVFLRAEEDFVSYTPRDKESLHENLRDPSPGVKAENLELAIQKEIHDFAQLRDNVYHVYHNTEDLRGEPHTVAIRGEDGVCVTEEVFKRPLLLQPTYRYHHLPLPEQGPPLEAQFDAFVSVLRETPSLLPLRDNHGPLPALLFSCQSGVGRTNLGMVLGTLVMFHHSRTTSQLEAASPLAKPLPMEQFQVIQGFICKVPQGKKMVEEVDRAISACAELHDLKEEVLKNQRRLESFRPESRGQECGSQQAVQQRALWSLELYFYLLLFNYYLHEQYPLAFALSFSRWLCTHPELYRLLVELNSVGPLVPGDLIAKGSLEADDLVSLDALSTVREMDVANFRRVPRMPIYGTAQPSAKALGNILAYLSDAKRKLRQVVWIFLREEVVLECDGHTHSLWPPGPALAPEHLVALEAQLKAHLSAPVPNTKSPTAPRFQKCLTTQEVFSQHQGACLGLTYCRIPVPDFCAPREEDFDRLLEALRAALTKDPGTGFVFSCLSGQGRTTTAMVVAVLACWHIGGCPEVGEEELVSVPDAKFTKGEFQVVMKVVQLLPDGHHVKKEVDAALDIVSETMTPMHYHLREIIISTYRQAKATKEAQEAQRLQLRSLQYLERYIYLILFNAYLRLEKTSSWQRPFSTWMREVATKAGIYEILNQLGFPELESIEEQPLSRLRYRWQEQSRDPEPCDVGDFL.

Residues Met1–Ser34 are disordered. A lipid anchor (N-myristoyl glycine) is attached at Gly2. The residue at position 89 (Ser89) is a Phosphoserine.

Belongs to the paladin family. In terms of tissue distribution, vascular expression detected in the central nervous system, kidney, lung, heart, skeletal muscle, white adipose tissue (WAT), brown adipose tissue, liver, pancreas and spleen. Not expressed in all vessels: for instance, not expressed in capillaries in the brain, and expressed mainly in large vessels in the heart, WAT, liver, pancreas and kidney. Predominant nonvascular expression in myocardium and lung mesenchyme. In large vessels, primarily expressed by smooth muscle cells, but occasionally detected at low levels in the endothelium. Expressed in various cells of the hematopoietic lineage.

The protein resides in the cytoplasm. It localises to the cytosol. The protein is Paladin (Pald1) of Mus musculus (Mouse).